A 178-amino-acid chain; its full sequence is Large ribosomal subunit protein uL6 (178 aa).

Belongs to the universal ribosomal protein uL6 family. Part of the 50S ribosomal subunit.

Functionally, this protein binds to the 23S rRNA, and is important in its secondary structure. It is located near the subunit interface in the base of the L7/L12 stalk, and near the tRNA binding site of the peptidyltransferase center. In Geobacillus kaustophilus (strain HTA426), this protein is Large ribosomal subunit protein uL6.